The sequence spans 496 residues: MGYFYLTAETWTLLVAFVTLLLVYAYWPYGTFKRLGISGPKPVPFFGTMLHYRRGFFTFDEECKKKYGKVWGIYDGRQPVLCVTDPEIIKAVLVKECLSFFTNRRNFRLNGPLYDAVSIAEDDQWKRIRSVLSPSFTSGRLKEMFEIMKNHSANLIRSMKKKADKDEPLDLKEFFGSYSMDVVTSTAFSVDIDSLNNPSDPFVTNIKKMLKFDFLNPLFLAVAFFPFLGPILEKFELSFFPKSVTDFFYASLEKIKSNREASQQKSRVDFLQLMIDSQKNSGAQQDKSLTDHEILSQSMIFIFAGYETSSSSLTFLAYNLATNPEVMKKLQEEIDATFPNKAPVHYQPLMEMEYLDCVINESLRLFPIAARLERVAKAAVEINGVVIPKDMVVMIPTWPLHRDPEIWPEPEAFKPERFSKKNKDNIDPYIYMPFGSGPRNCIGMRFALVLIKLAVVEILQQYSFSVCKETEVPFEMDIQGLLAPKRPIQLKLVPRS.

Cys441 contacts heme.

This sequence belongs to the cytochrome P450 family. The cofactor is heme. Highly expressed in liver and intestine. Moderate expression in gill and spleen. Low expression in kidney, brain and heart.

It is found in the endoplasmic reticulum membrane. The protein localises to the microsome membrane. The enzyme catalyses an organic molecule + reduced [NADPH--hemoprotein reductase] + O2 = an alcohol + oxidized [NADPH--hemoprotein reductase] + H2O + H(+). Functionally, putative steroid 6-beta-hydroxylase. The protein is Cytochrome P450 3A30 (cyp3a30) of Fundulus heteroclitus (Killifish).